The sequence spans 518 residues: Protein FAM98A (518 aa).

Disordered regions lie at residues 300–415 (GRVP…GHSS) and 434–518 (GSGY…HYTS). Over residues 302–311 (VPDRGGRPNE) the composition is skewed to basic and acidic residues. Composition is skewed to gly residues over residues 349–364 (GGRG…GGRG), 383–396 (WTDG…GYQD), and 405–415 (QPGGYHGGHSS). Residues 447–459 (RYQDGGHHGDRGG) are compositionally biased toward basic and acidic residues. A compositionally biased stretch (gly residues) spans 460–484 (GRGGRGGRGGRGGRAGQGGGWGGRG). Residues 488 to 504 (YHQGGQFEQHFQHGGYQ) show a composition bias toward low complexity. Polar residues predominate over residues 505-518 (YNHSGFGQGRHYTS).

It belongs to the FAM98 family. As to quaternary structure, interacts (via N- and C-terminus) with DDX1. Interacts (via N- and C-terminus) with C14orf166. Interacts with FAM98B. Interacts with PLEKHM1 (via N- and C-terminus).

In terms of biological role, positively stimulates PRMT1-induced protein arginine methylation. Involved in skeletal homeostasis. Positively regulates lysosome peripheral distribution and ruffled border formation in osteoclasts. This chain is Protein FAM98A, found in Pongo abelii (Sumatran orangutan).